A 186-amino-acid chain; its full sequence is Peptidyl-tRNA hydrolase (186 aa).

A tRNA-binding site is contributed by tyrosine 14. Catalysis depends on histidine 19, which acts as the Proton acceptor. The tRNA site is built by tyrosine 64, asparagine 66, and asparagine 112.

Belongs to the PTH family. As to quaternary structure, monomer.

It is found in the cytoplasm. The enzyme catalyses an N-acyl-L-alpha-aminoacyl-tRNA + H2O = an N-acyl-L-amino acid + a tRNA + H(+). Its function is as follows. Hydrolyzes ribosome-free peptidyl-tRNAs (with 1 or more amino acids incorporated), which drop off the ribosome during protein synthesis, or as a result of ribosome stalling. Catalyzes the release of premature peptidyl moieties from peptidyl-tRNA molecules trapped in stalled 50S ribosomal subunits, and thus maintains levels of free tRNAs and 50S ribosomes. The sequence is that of Peptidyl-tRNA hydrolase from Bacillus cereus (strain ATCC 10987 / NRS 248).